Here is a 1382-residue protein sequence, read N- to C-terminus: Hepatocyte growth factor receptor (1382 aa).

The first 24 residues, Met-1–Gly-24, serve as a signal peptide directing secretion. Residues Glu-25–Leu-935 are Extracellular-facing. Positions Glu-27 to Leu-516 constitute a Sema domain. N-linked (GlcNAc...) asparagine glycosylation is present at Asn-45. Intrachain disulfides connect Cys-95/Cys-101, Cys-98/Cys-160, Cys-133/Cys-141, and Cys-173/Cys-176. Asn-106 carries N-linked (GlcNAc...) asparagine glycosylation. 2 N-linked (GlcNAc...) asparagine glycosylation sites follow: Asn-203 and Asn-359. Disulfide bonds link Cys-299-Cys-364 and Cys-386-Cys-398. Residues Asn-400, Asn-406, and Asn-450 are each glycosylated (N-linked (GlcNAc...) asparagine). 4 disulfide bridges follow: Cys-521–Cys-539, Cys-527–Cys-562, Cys-530–Cys-546, and Cys-542–Cys-552. 3 consecutive IPT/TIG domains span residues Pro-564–Val-656, Pro-658–Gln-740, and Pro-743–Val-837. The O-linked (Man) threonine glycan is linked to Thr-583. N-linked (GlcNAc...) asparagine glycosylation is found at Asn-608 and Asn-636. Thr-677 carries O-linked (Man) threonine glycosylation. The N-linked (GlcNAc...) asparagine glycan is linked to Asn-751. O-linked (Man) threonine glycosylation is present at Thr-762. N-linked (GlcNAc...) asparagine glycans are attached at residues Asn-786, Asn-880, and Asn-931. The chain crosses the membrane as a helical span at residues Ile-936–Leu-956. Topologically, residues Lys-957–Thr-1382 are cytoplasmic. At Ser-967 the chain carries Phosphoserine. Position 978 is a phosphothreonine (Thr-978). Residues Ser-991, Ser-998, and Ser-1001 each carry the phosphoserine modification. Residue Tyr-1004 is modified to Phosphotyrosine. In terms of domain architecture, Protein kinase spans Val-1079–Ile-1346. ATP-binding positions include Ile-1085 to Val-1093 and Lys-1111. Asp-1205 functions as the Proton acceptor in the catalytic mechanism. Residues Leu-1213–Thr-1382 form an interaction with RANBP9 region. Tyr-1231 carries the post-translational modification Phosphotyrosine. Phosphotyrosine; by autocatalysis occurs at positions 1235 and 1236. At Thr-1290 the chain carries Phosphothreonine. The tract at residues Trp-1321 to Val-1360 is interaction with MUC20. Phosphotyrosine; by autocatalysis is present on residues Tyr-1350 and Tyr-1357. A Phosphotyrosine modification is found at Tyr-1366.

Belongs to the protein kinase superfamily. Tyr protein kinase family. As to quaternary structure, heterodimer made of an alpha chain (50 kDa) and a beta chain (145 kDa) which are disulfide linked. Binds PLXNB1. Interacts when phosphorylated with downstream effectors including STAT3, PIK3R1, SRC, PCLG1, GRB2 and GAB1. Interacts with SPSB1, SPSB2 and SPSB4. Interacts with INPP5D/SHIP1. When phosphorylated at Tyr-1357, interacts with INPPL1/SHIP2. Interacts with RANBP9 and RANBP10, as well as SPSB1, SPSB2, SPSB3 and SPSB4. SPSB1 binding occurs in the presence and in the absence of HGF, however HGF treatment has a positive effect on this interaction. Interacts with MUC20; prevents interaction with GRB2 and suppresses hepatocyte growth factor-induced cell proliferation. Interacts with GRB10. Interacts with PTPN1 and PTPN2. Interacts with HSP90AA1 and HSP90AB1; the interaction suppresses MET kinase activity. Interacts with tensin TNS3. Interacts (when phosphorylated) with tensin TNS4 (via SH2 domain); the interaction increases MET protein stability by inhibiting MET endocytosis and subsequent lysosomal degradation. Autophosphorylated in response to ligand binding on Tyr-1235 and Tyr-1236 in the kinase domain leading to further phosphorylation of Tyr-1350 and Tyr-1357 in the C-terminal multifunctional docking site. Dephosphorylated by PTPRJ at Tyr-1350 and Tyr-1366. Dephosphorylated by PTPN1 and PTPN2. Post-translationally, ubiquitinated. Ubiquitination by CBL regulates the receptor stability and activity through proteasomal degradation. In terms of processing, O-mannosylation of IPT/TIG domains by TMEM260 is required for protein maturation. O-mannosylated residues are composed of single mannose glycans that are not elongated or modified.

It is found in the membrane. It carries out the reaction L-tyrosyl-[protein] + ATP = O-phospho-L-tyrosyl-[protein] + ADP + H(+). With respect to regulation, in its inactive state, the C-terminal tail interacts with the catalytic domain and inhibits the kinase activity. Upon ligand binding, the C-terminal tail is displaced and becomes phosphorylated, thus increasing the kinase activity. Receptor tyrosine kinase that transduces signals from the extracellular matrix into the cytoplasm by binding to hepatocyte growth factor/HGF ligand. Regulates many physiological processes including proliferation, scattering, morphogenesis and survival. Ligand binding at the cell surface induces autophosphorylation of MET on its intracellular domain that provides docking sites for downstream signaling molecules. Following activation by ligand, interacts with the PI3-kinase subunit PIK3R1, PLCG1, SRC, GRB2, STAT3 or the adapter GAB1. Recruitment of these downstream effectors by MET leads to the activation of several signaling cascades including the RAS-ERK, PI3 kinase-AKT, or PLCgamma-PKC. The RAS-ERK activation is associated with the morphogenetic effects while PI3K/AKT coordinates prosurvival effects. During embryonic development, MET signaling plays a role in gastrulation, development and migration of muscles and neuronal precursors, angiogenesis and kidney formation. In adults, participates in wound healing as well as organ regeneration and tissue remodeling. Also promotes differentiation and proliferation of hematopoietic cells. In Loxodonta africana (African elephant), this protein is Hepatocyte growth factor receptor (MET).